Here is a 189-residue protein sequence, read N- to C-terminus: Inner membrane-spanning protein YciB (189 aa).

Helical transmembrane passes span 23–43, 54–74, 82–102, 120–140, and 150–170; these read ILLA…FVWW, ITLA…DAAF, VNWL…KTLI, LNLA…YVFK, and FKLF…GVYL.

This sequence belongs to the YciB family.

It is found in the cell inner membrane. Plays a role in cell envelope biogenesis, maintenance of cell envelope integrity and membrane homeostasis. The protein is Inner membrane-spanning protein YciB of Chromohalobacter salexigens (strain ATCC BAA-138 / DSM 3043 / CIP 106854 / NCIMB 13768 / 1H11).